The primary structure comprises 168 residues: Sperm acrosome-associated protein 9 (168 aa).

In terms of assembly, microtubule inner protein component of sperm flagellar doublet microtubules. Interacts with CABP1 and CALR. Interacts with INCA1. Interacts with microtubules. In terms of tissue distribution, testis-specific. Expressed in round spermatids.

It localises to the cytoplasm. The protein resides in the cytoplasmic vesicle. The protein localises to the secretory vesicle. It is found in the acrosome. Its subcellular location is the cytoskeleton. It localises to the cilium basal body. The protein resides in the flagellum axoneme. The protein localises to the cilium axoneme. It is found in the nucleus. Its function is as follows. Microtubule inner protein (MIP) part of the dynein-decorated doublet microtubules (DMTs) of multiciliated respiratory cells and the distal singlet microtubules of monoflagellated spermatozoa. Forms an extensive interaction network cross-linking the lumen of axonemal doublet microtubules. This is Sperm acrosome-associated protein 9 (Spaca9) from Rattus norvegicus (Rat).